The primary structure comprises 341 residues: Chorismate synthase (341 aa).

Disordered regions lie at residues 45–64 (LERR…GRQE) and 109–134 (HADD…GRET). R48 is a binding site for NADP(+). Residues 128–130 (RSS), G280, 295–299 (KPTSS), and R308 contribute to the FMN site.

Belongs to the chorismate synthase family. As to quaternary structure, homotetramer. FMNH2 serves as cofactor.

It carries out the reaction 5-O-(1-carboxyvinyl)-3-phosphoshikimate = chorismate + phosphate. Its pathway is metabolic intermediate biosynthesis; chorismate biosynthesis; chorismate from D-erythrose 4-phosphate and phosphoenolpyruvate: step 7/7. Catalyzes the anti-1,4-elimination of the C-3 phosphate and the C-6 proR hydrogen from 5-enolpyruvylshikimate-3-phosphate (EPSP) to yield chorismate, which is the branch point compound that serves as the starting substrate for the three terminal pathways of aromatic amino acid biosynthesis. This reaction introduces a second double bond into the aromatic ring system. This chain is Chorismate synthase, found in Bdellovibrio bacteriovorus (strain ATCC 15356 / DSM 50701 / NCIMB 9529 / HD100).